A 103-amino-acid polypeptide reads, in one-letter code: uncharacterized protein (103 aa).

Residues Met1–Asn10 show a composition bias toward basic residues. Disordered stretches follow at residues Met1–Lys38 and Ala77–Lys103.

This is an uncharacterized protein from Schizosaccharomyces pombe (strain 972 / ATCC 24843) (Fission yeast).